The following is a 223-amino-acid chain: GTP-binding nuclear protein Ran (223 aa).

Residues 8 to 172 enclose the Small GTPase Ran-type domain; the sequence is VVAEFKLVLV…LWILRKLTGD (165 aa). 19-26 provides a ligand contact to GTP; it reads DGGVGKTT. A switch-I region spans residues 38–46; sequence KRYIATQGV. GTP contacts are provided by residues glycine 69, 123–126, and 151–153; these read NKVD and SAK. A switch-II region spans residues 69–85; it reads GQEKLGGLREGYYIGAD.

It belongs to the small GTPase superfamily. Ran family. In terms of assembly, monomer. Found in a nuclear export complex with RanGTP, exportin and pre-miRNA.

The protein localises to the nucleus. GTP-binding protein involved in nucleocytoplasmic transport. Required for the import of protein into the nucleus and also for RNA export. Involved in chromatin condensation and control of cell cycle. This is GTP-binding nuclear protein Ran from Tetrahymena pyriformis.